The following is a 1282-amino-acid chain: ATP-dependent helicase/nuclease subunit A (1282 aa).

Residues 10 to 481 (SKWTDSQRQV…IELQENFRSS (472 aa)) form the UvrD-like helicase ATP-binding domain. 31–38 (AGAGAGKT) is a binding site for ATP. Residues 516-820 (KPRELYLNED…RLMSIHKSKG (305 aa)) form the UvrD-like helicase C-terminal domain.

This sequence belongs to the helicase family. AddA subfamily. Heterodimer of AddA and AddB/RexB. The cofactor is Mg(2+).

It carries out the reaction Couples ATP hydrolysis with the unwinding of duplex DNA by translocating in the 3'-5' direction.. The catalysed reaction is ATP + H2O = ADP + phosphate + H(+). Its function is as follows. The heterodimer acts as both an ATP-dependent DNA helicase and an ATP-dependent, dual-direction single-stranded exonuclease. Recognizes the chi site generating a DNA molecule suitable for the initiation of homologous recombination. The AddA nuclease domain is required for chi fragment generation; this subunit has the helicase and 3' -&gt; 5' nuclease activities. This chain is ATP-dependent helicase/nuclease subunit A, found in Natranaerobius thermophilus (strain ATCC BAA-1301 / DSM 18059 / JW/NM-WN-LF).